We begin with the raw amino-acid sequence, 291 residues long: Diaminopimelate epimerase (291 aa).

Substrate-binding residues include asparagine 13, glutamine 46, and asparagine 66. Residue cysteine 75 is the Proton donor of the active site. Substrate-binding positions include 76–77 (GN), asparagine 156, asparagine 189, and 207–208 (ER). Catalysis depends on cysteine 216, which acts as the Proton acceptor. 217 to 218 (GS) contributes to the substrate binding site.

This sequence belongs to the diaminopimelate epimerase family. Homodimer.

It localises to the cytoplasm. The catalysed reaction is (2S,6S)-2,6-diaminopimelate = meso-2,6-diaminopimelate. It functions in the pathway amino-acid biosynthesis; L-lysine biosynthesis via DAP pathway; DL-2,6-diaminopimelate from LL-2,6-diaminopimelate: step 1/1. Functionally, catalyzes the stereoinversion of LL-2,6-diaminopimelate (L,L-DAP) to meso-diaminopimelate (meso-DAP), a precursor of L-lysine and an essential component of the bacterial peptidoglycan. The polypeptide is Diaminopimelate epimerase (Rhodospirillum centenum (strain ATCC 51521 / SW)).